Consider the following 368-residue polypeptide: Meiotic driver wtf23 (368 aa).

Positions 1-98 (MKNKYYPLRS…SSGTADNSST (98 aa)) are disordered. The segment covering 11-29 (SMDELSAKNDNEIDLEKGP) has biased composition (basic and acidic residues). Polar residues-rich tracts occupy residues 57–72 (GANN…STTP) and 89–98 (SSGTADNSST). 7 helical membrane passes run 105 to 124 (FLSF…YLTY), 139 to 158 (YFGV…WYFY), 170 to 192 (IFLA…VISI), 202 to 221 (MIII…GCVK), 234 to 256 (STCT…FWTF), 266 to 283 (VFLL…TMFL), and 328 to 350 (GIAF…FRGG).

It belongs to the WTF family. As to quaternary structure, homomer. Forms protein aggregates. The two isoforms can interact with each other and with themselves. High sequence similarity is required for their interaction.

The protein localises to the spore membrane. It is found in the vacuole membrane. It localises to the ascus epiplasm. The protein resides in the cytoplasm. Its subcellular location is the endoplasmic reticulum membrane. Promotes unequal transmission of alleles from the parental zygote to progeny spores by acting as poison/antidote system where the poison and antidote proteins are produced from the same locus; the poison component is trans-acting and targets all spores within an ascus whereas the antidote component is spore-specific, leading to poisoning of all progeny that do not inherit the allele. Its function is as follows. Localizes isoform 2 to the vacuole thereby facilitating its degradation. In terms of biological role, forms toxic aggregates that disrupt spore maturation. In Schizosaccharomyces pombe (strain 972 / ATCC 24843) (Fission yeast), this protein is Meiotic driver wtf23.